The primary structure comprises 626 residues: (+)-3-carene synthase 1, chloroplastic (626 aa).

The N-terminal 45 residues, 1-45 (MSLISAVPLASSCVSKSLISSVREHKALRRAIATLQMSRPGKSVA), are a transit peptide targeting the chloroplast. Positions 377, 381, and 529 each coordinate Mg(2+). Positions 377 to 381 (DDMYD) match the DDXXD motif motif.

It belongs to the terpene synthase family. Tpsd subfamily. Requires Mg(2+) as cofactor. Mn(2+) is required as a cofactor.

The protein resides in the plastid. It localises to the chloroplast. The enzyme catalyses (2E)-geranyl diphosphate = (+)-car-3-ene + diphosphate. It carries out the reaction (2E)-geranyl diphosphate = terpinolene + diphosphate. It functions in the pathway terpene metabolism; oleoresin biosynthesis. Its pathway is secondary metabolite biosynthesis; terpenoid biosynthesis. In terms of biological role, monoterpene synthase (TPS) involved in the biosynthesis of monoterpene natural products included in conifer oleoresin secretions and volatile emissions; these compounds contribute to biotic and abiotic stress defense against herbivores and pathogens. Catalyzes the conversion of (2E)-geranyl diphosphate (GPP) to (+)-3-carene and, to a lower extent, to terpinolene. The protein is (+)-3-carene synthase 1, chloroplastic of Pinus banksiana (Jack pine).